Here is a 155-residue protein sequence, read N- to C-terminus: Ribosomal RNA large subunit methyltransferase H (155 aa).

Positions 72 and 104 each coordinate S-adenosyl-L-methionine.

Belongs to the RNA methyltransferase RlmH family. In terms of assembly, homodimer.

Its subcellular location is the cytoplasm. The enzyme catalyses pseudouridine(1915) in 23S rRNA + S-adenosyl-L-methionine = N(3)-methylpseudouridine(1915) in 23S rRNA + S-adenosyl-L-homocysteine + H(+). Specifically methylates the pseudouridine at position 1915 (m3Psi1915) in 23S rRNA. This is Ribosomal RNA large subunit methyltransferase H from Fusobacterium nucleatum subsp. nucleatum (strain ATCC 25586 / DSM 15643 / BCRC 10681 / CIP 101130 / JCM 8532 / KCTC 2640 / LMG 13131 / VPI 4355).